The sequence spans 401 residues: Beta-ketoadipyl-CoA thiolase (401 aa).

C90 serves as the catalytic Acyl-thioester intermediate. Residues H357 and C387 each act as proton acceptor in the active site.

This sequence belongs to the thiolase-like superfamily. Thiolase family.

It carries out the reaction succinyl-CoA + acetyl-CoA = 3-oxoadipyl-CoA + CoA. Its pathway is aromatic compound metabolism; phenylacetate degradation. In terms of biological role, catalyzes thiolytic cleavage of beta-ketoadipyl-CoA to succinyl-CoA and acetyl-CoA. This is Beta-ketoadipyl-CoA thiolase (paaJ) from Escherichia coli.